The chain runs to 193 residues: MTEYLLLFVGTVLVNNFVLVKFLGLCPFMGVSKKLETAIGMGLATTFVLTLASVCAWMVNSFILLPLGLVYLRTLAFILVIAVVVQFTELVVRKTSPALYRLLGIFLPLITTNCAVLGVALLNINQSHNFMQSAVYGFSAAAGFSLVMVLFAAIRERLAVADVPAPFRGSSIALITAGLMSLAFMGFTGLVKF.

6 helical membrane-spanning segments follow: residues 5-25 (LLLF…FLGL), 39-59 (IGMG…AWMV), 62-82 (FILL…LVIA), 102-122 (LLGI…VALL), 134-154 (AVYG…FAAI), and 171-191 (SIAL…TGLV).

It belongs to the NqrDE/RnfAE family. The complex is composed of six subunits: RnfA, RnfB, RnfC, RnfD, RnfE and RnfG.

Its subcellular location is the cell inner membrane. In terms of biological role, part of a membrane-bound complex that couples electron transfer with translocation of ions across the membrane. In Yersinia enterocolitica serotype O:8 / biotype 1B (strain NCTC 13174 / 8081), this protein is Ion-translocating oxidoreductase complex subunit A.